Here is a 137-residue protein sequence, read N- to C-terminus: Oleosin Ara h 11.0102 (137 aa).

Ala-2 carries the N-acetylalanine; alternate modification. 2 consecutive transmembrane segments (helical) span residues Ala-27–Ile-47 and Leu-55–Leu-75.

This sequence belongs to the oleosin family. In terms of tissue distribution, expressed in seeds (at protein level).

It localises to the lipid droplet. The protein resides in the membrane. In terms of biological role, may have a structural role to stabilize the lipid body during desiccation of the seed by preventing coalescence of the oil. Probably interacts with both lipid and phospholipid moieties of lipid bodies. May also provide recognition signals for specific lipase anchorage in lipolysis during seedling growth. This is Oleosin Ara h 11.0102 from Arachis hypogaea (Peanut).